The primary structure comprises 347 residues: Isopentenyl-diphosphate delta-isomerase (347 aa).

Substrate is bound at residue 9-10; sequence RK. FMN is bound by residues 65 to 67, S95, and N124; that span reads AMT. 95–97 contacts substrate; sequence STH. Q154 provides a ligand contact to substrate. E155 serves as a coordination point for Mg(2+). FMN is bound by residues K186, S211, T216, 262-264, and 283-284; these read GVR and SR.

Belongs to the IPP isomerase type 2 family. As to quaternary structure, homooctamer. Dimer of tetramers. FMN is required as a cofactor. Requires NADPH as cofactor. The cofactor is Mg(2+).

Its subcellular location is the cytoplasm. It carries out the reaction isopentenyl diphosphate = dimethylallyl diphosphate. Functionally, involved in the biosynthesis of isoprenoids. Catalyzes the 1,3-allylic rearrangement of the homoallylic substrate isopentenyl (IPP) to its allylic isomer, dimethylallyl diphosphate (DMAPP). The polypeptide is Isopentenyl-diphosphate delta-isomerase (Staphylococcus saprophyticus subsp. saprophyticus (strain ATCC 15305 / DSM 20229 / NCIMB 8711 / NCTC 7292 / S-41)).